An 854-amino-acid chain; its full sequence is Probable disease resistance protein At1g51480 (854 aa).

Residues Arg-25–Lys-62 are a coiled coil. In terms of domain architecture, NB-ARC spans Ala-138–Tyr-441. Gly-180–Thr-187 provides a ligand contact to ATP. LRR repeat units lie at residues Ile-514–Ser-535, Asn-536–Phe-557, Lys-560–Leu-582, Ser-584–Leu-605, Lys-607–Leu-629, and Asn-631–Leu-652.

Belongs to the disease resistance NB-LRR family.

Functionally, probable disease resistance protein. In Arabidopsis thaliana (Mouse-ear cress), this protein is Probable disease resistance protein At1g51480.